The chain runs to 329 residues: Short-chain dehydrogenase/reductase prx4 (329 aa).

3 residues coordinate NADP(+): S58, I60, and N81. The N-linked (GlcNAc...) asparagine glycan is linked to N91. NADP(+) contacts are provided by D98, N121, K161, Y194, K198, and T229. Y194 functions as the Proton acceptor in the catalytic mechanism. Catalysis depends on K198, which acts as the Lowers pKa of active site Tyr. Residues 238–258 form a helical membrane-spanning segment; that stretch reads GPLMAAGLPVSSAHMVGLAVV.

It belongs to the short-chain dehydrogenases/reductases (SDR) family.

The protein localises to the membrane. It participates in sesquiterpene biosynthesis. Its function is as follows. Short-chain dehydrogenase/reductase; part of the gene cluster that mediates the biosynthesis of PR-toxin, a bicyclic sesquiterpene belonging to the eremophilane class and acting as a mycotoxin. The first step of the pathway is catalyzed by the aristolochene synthase which performs the cyclization of trans,trans-farnesyl diphosphate (FPP) to the bicyclic sesquiterpene aristolochene. Following the formation of aristolochene, the non-oxygenated aristolochene is converted to the trioxygenated intermediate eremofortin B, via 7-epi-neopetasone. This conversion appears to involve three enzymes, a hydroxysterol oxidase-like enzyme, the quinone-oxidase prx3 that forms the quinone-type-structure in the bicyclic nucleus of aristolochene with the C8-oxo group and the C-3 hydroxyl group, and the P450 monooxygenase ORF6 that introduces the epoxide at the double bond between carbons 1 and 2. No monoxy or dioxy-intermediates have been reported to be released to the broth, so these three early oxidative reactions may be coupled together. Eremofortin B is further oxidized by another P450 monooxygenase, that introduces a second epoxide between carbons 7 and 11 prior to acetylation to eremofortin A by the acetyltransferase ORF8. The second epoxidation may be performed by a second P450 monooxygenase. After the acetylation step, eremofortin A is converted to eremofortin C and then to PR-toxin. First the conversion of eremofortin A to eremofortin C proceeds by oxidation of the side chain of the molecule at C-12 and is catalyzed by the short-chain oxidoreductase prx1. The cytochrome P450 monooxygenase ORF6 is probably also involved in this step. The primary alcohol formed at C-12 is finally oxidized by the short-chain alcohol dehydrogenase prx4 that forms PR-toxin. This chain is Short-chain dehydrogenase/reductase prx4, found in Penicillium roqueforti.